The sequence spans 99 residues: Large ribosomal subunit protein bL28 (99 aa).

It belongs to the bacterial ribosomal protein bL28 family.

This chain is Large ribosomal subunit protein bL28, found in Caulobacter vibrioides (strain ATCC 19089 / CIP 103742 / CB 15) (Caulobacter crescentus).